The primary structure comprises 331 residues: Gamma-parvin (331 aa).

At M1 the chain carries N-acetylmethionine. The disordered stretch occupies residues 17–39 (EPPAEEELSKGGKKKYLPPTSRK). Calponin-homology (CH) domains lie at 44–151 (EELQ…KRFQ) and 210–317 (NAVK…CKHT).

Belongs to the parvin family. Interacts with ILK; the interaction promotes the establishment of cell polarity required for leukocyte migration. Interacts with ARHGEF6; the guanine nucleotide exchange factor activity of ARHGEF6 is essential for the PARVG-induced enhancement of cell spreading. In terms of tissue distribution, expressed predominantly in lymphoid organs, including spleen, thymus, lymph node, bone marrow and peripheral blood leukocytes and moderately in the digestive tract, including stomach, duodenum, jejunum, ileum, ileocecum and appendix, as well as in lung and liver. Also expressed in tumors, but at a lower level than in the corresponding normal tissues.

It is found in the cell junction. Its subcellular location is the focal adhesion. It localises to the cell membrane. The protein resides in the cytoplasm. The protein localises to the cytoskeleton. Functionally, plays a role with ILK in promoting the cell adhesion and spreading of leukocytes. The protein is Gamma-parvin (PARVG) of Homo sapiens (Human).